A 173-amino-acid polypeptide reads, in one-letter code: Cytochrome c-type biogenesis protein CcmE (173 aa).

At 1–7 (MTRKSRR) the chain is on the cytoplasmic side. Residues 8 to 28 (LILIAACGAVLALALGLILSA) traverse the membrane as a helical; Signal-anchor for type II membrane protein segment. Topologically, residues 29 to 173 (MSGSIVFFRS…DATLGQRSER (145 aa)) are periplasmic. Heme contacts are provided by His122 and Tyr126. The disordered stretch occupies residues 134-173 (ALKAQGRWQEGGGKDASKAAPKDAAKPETADATLGQRSER). Positions 145 to 162 (GGKDASKAAPKDAAKPET) are enriched in basic and acidic residues.

This sequence belongs to the CcmE/CycJ family.

It localises to the cell inner membrane. Its function is as follows. Heme chaperone required for the biogenesis of c-type cytochromes. Transiently binds heme delivered by CcmC and transfers the heme to apo-cytochromes in a process facilitated by CcmF and CcmH. This Methylorubrum extorquens (strain CM4 / NCIMB 13688) (Methylobacterium extorquens) protein is Cytochrome c-type biogenesis protein CcmE.